The primary structure comprises 317 residues: SWI/SNF-related matrix-associated actin-dependent regulator of chromatin subfamily E member 1-related (317 aa).

Positions 1–17 (MSHGPKQPGAAAAPAGG) are enriched in low complexity. Positions 1–71 (MSHGPKQPGA…RKKILPNGPK (71 aa)) are disordered. Lysine 31 participates in a covalent cross-link: Glycyl lysine isopeptide (Lys-Gly) (interchain with G-Cter in SUMO2). A compositionally biased stretch (basic and acidic residues) spans 31-52 (KQERGEGPRAGEKGSHEEEPVK). Residues 53–65 (KRGWPKGKKRKKI) are compositionally biased toward basic residues. The segment at residues 70-138 (PKAPVTGYVR…QYMKELRAYQ (69 aa)) is a DNA-binding region (HMG box). Serine 160 carries the phosphoserine modification. A coiled-coil region spans residues 190-257 (EEFLDQNKAR…LQQQLQAVRQ (68 aa)).

Component of a BHC histone deacetylase complex that contains HDAC1, HDAC2, HMG20B/BRAF35, KDM1A, RCOR1/CoREST and PHF21A/BHC80. The BHC complex may also contain ZMYM2, ZNF217, ZMYM3, GSE1 and GTF2I. Interacts with the BRCA2 tumor suppressor protein. Interacts with DTNB. As to expression, ubiquitously expressed in adult tissues.

It is found in the nucleus. It localises to the chromosome. Its function is as follows. Required for correct progression through G2 phase of the cell cycle and entry into mitosis. Required for RCOR1/CoREST mediated repression of neuronal specific gene promoters. This Homo sapiens (Human) protein is SWI/SNF-related matrix-associated actin-dependent regulator of chromatin subfamily E member 1-related (HMG20B).